Reading from the N-terminus, the 947-residue chain is Protein RRC1-like (947 aa).

Over residues 1 to 11 (MVKDEFFLDHP) the composition is skewed to basic and acidic residues. Disordered regions lie at residues 1 to 35 (MVKD…RMKQ) and 63 to 167 (PNDN…DELP). The span at 12–34 (GRKHRSRNTEKKKKPRRRERRMK) shows a compositional bias: basic residues. Composition is skewed to basic and acidic residues over residues 66–84 (NKLK…DSIS) and 104–155 (KGPE…DHNS). Residues 187 to 268 (TNLYVVNLSS…YELKIGWGKV (82 aa)) form the RRM domain. An SURP motif repeat occupies 336–379 (IIDTMALNVLDGGCAFEQAIMERGRGNPLFNFLFELGSKEHTYY). Positions 412–434 (PPLPATRSPEHGKESRGTYAAGK) are disordered. One can recognise a CID domain in the interval 444-589 (LTDSQRDEFE…GLRATFLRSR (146 aa)). The 35-residue stretch at 638–672 (LMNRPISELERRCRHNGLSLLGGREMMVARLVCLK) folds into the SAP domain. 2 disordered regions span residues 752 to 797 (REDD…PENE) and 846 to 947 (GLSG…RGMR). 3 stretches are compositionally biased toward basic and acidic residues: residues 854-876 (LPEK…RSES), 888-916 (LTRE…LDKD), and 924-947 (SSRE…RGMR).

As to expression, expressed in leaves, inflorescence stems, roots, flower buds, open flowers and siliques.

Probable SR-like splicing factor. The polypeptide is Protein RRC1-like (Arabidopsis thaliana (Mouse-ear cress)).